The following is a 510-amino-acid chain: Pre-glycoprotein polyprotein GP complex (510 aa).

A lipid anchor (N-myristoyl glycine; by host) is attached at Gly2. Topologically, residues 2–17 (GQFITLMQSIPEALNM) are extracellular. A helical transmembrane segment spans residues 18 to 32 (AFNVALVIVSLLCVT). Lys33 is a topological domain (cytoplasmic). Residues 34-53 (GLINLWKCGIIQLLMFLALA) form a helical membrane-spanning segment. Extracellular-side segments run 54–58 (GRSCD) and 59–448 (GEYK…ALAD). Residue Cys57 participates in Zn(2+) binding. Asn75, Asn90, Asn101, Asn112, Asn117, Asn122, Asn133, Asn182, Asn218, and Asn243 each carry an N-linked (GlcNAc...) asparagine; by host glycan. 4 disulfide bridges follow: Cys87-Cys250, Cys295-Cys308, Cys317-Cys326, and Cys380-Cys401. N-linked (GlcNAc...) asparagine; by host glycosylation is found at Asn381, Asn389, Asn406, and Asn411. Residues 449–469 (LCFWSLVFFTTTVFFQLIGIP) form a helical membrane-spanning segment. Topologically, residues 470–510 (THRHLIGEGCPKPHRLTSNSLCSCGFYKIPKKPFRWVRKGK) are cytoplasmic. Zn(2+)-binding residues include His471, His473, Cys479, His483, Cys491, and Cys493.

This sequence belongs to the arenaviridae GPC protein family. As to quaternary structure, homotetramer; disulfide-linked. In terms of assembly, homotetramer. GP2 homotetramers bind through ionic interactions with GP1 homotetramers to form the GP complex together with the stable signal peptide. The GP-C polyprotein interacts with the host protease MBTPS1/SKI-1 resulting in the polyprotein processing. Post-translationally, specific enzymatic cleavages in vivo yield mature proteins. GP-C polyprotein is cleaved in the endoplasmic reticulum by the host protease MBTPS1. Only cleaved glycoprotein is incorporated into virions. The SSP remains stably associated with the GP complex following cleavage by signal peptidase and plays crucial roles in the trafficking of GP through the secretory pathway. In terms of processing, myristoylation is necessary for GP2-mediated fusion activity.

It is found in the virion membrane. It localises to the host endoplasmic reticulum membrane. The protein localises to the host Golgi apparatus membrane. Its subcellular location is the host cell membrane. Its function is as follows. Class I viral fusion protein that directs fusion of viral and host endosomal membranes, leading to delivery of the nucleocapsid into the cytoplasm. Membrane fusion is mediated by irreversible conformational changes induced upon acidification in the endosome. In terms of biological role, stable signal peptide (SSP): cleaved and functions as a signal peptide. In addition, it is also retained as the third component of the GP complex. The SSP is required for efficient glycoprotein expression, post-translational maturation cleavage of GP1 and GP2, glycoprotein transport to the cell surface plasma membrane, formation of infectious virus particles, and acid pH-dependent glycoprotein-mediated cell fusion. Functionally, interacts with the host receptor. This is Pre-glycoprotein polyprotein GP complex from Pirital mammarenavirus (isolate Rat/Venezuela/VAV-488/1995) (PIRV).